The primary structure comprises 185 residues: Elongation factor P (185 aa).

It belongs to the elongation factor P family.

Its subcellular location is the cytoplasm. Its pathway is protein biosynthesis; polypeptide chain elongation. Functionally, involved in peptide bond synthesis. Stimulates efficient translation and peptide-bond synthesis on native or reconstituted 70S ribosomes in vitro. Probably functions indirectly by altering the affinity of the ribosome for aminoacyl-tRNA, thus increasing their reactivity as acceptors for peptidyl transferase. The polypeptide is Elongation factor P (Clostridium botulinum (strain ATCC 19397 / Type A)).